Reading from the N-terminus, the 545-residue chain is RAN GTPase-activating protein 2 (545 aa).

Residues 1-116 are WPP; it reads MADILDSRPH…VAARELISED (116 aa). LRR repeat units lie at residues 213–236, 241–264, 269–296, 325–348, 353–380, 382–405, 410–433, 439–462, and 467–494; these read GSILSSLNLSDNALGEKGVRAFGA, LSSLEELYLMNDGISKEAAQAVSE, TENLRVLHFHNNMTGDEGALAIAEVVKR, CTHMEKLDLRDNMFGTEAGVSLSK, FKHMTELYLSYLNLEDEGAIAIVNALKE, ASPIEVLEMAGNDITVEAASAIAA, KQDLNKLNLSENELKDEGCVQIAN, HSKLQYIDMSTNYIRRAGARALAH, and KEAFKLLNIDGNIISEEGIEELKEIFKK. The tract at residues 496–545 is disordered; sequence PELLGALDENDPDGEEDDDDEEDEEDEENEGNGNGELESKLKNLEVNQED. The span at 503–525 shows a compositional bias: acidic residues; sequence DENDPDGEEDDDDEEDEEDEENE.

It belongs to the RNA1 family. In terms of assembly, homodimer. Interacts with WIP1 and WIP2 through its WPP domain. Component of Ran complexes at least composed of WIT1 or WIT2, RANGAP1 or RANGAP2, and WIP1 or WIP2 or WIP3. Interacts with WIT1.

Its subcellular location is the cytoplasm. The protein localises to the nucleus membrane. It is found in the cytoskeleton. The protein resides in the spindle. It localises to the phragmoplast. In terms of biological role, GTPase activator for the nuclear Ras-related regulatory protein Ran, converting it to the putatively inactive GDP-bound state. The sequence is that of RAN GTPase-activating protein 2 (RANGAP2) from Arabidopsis thaliana (Mouse-ear cress).